A 238-amino-acid chain; its full sequence is Cysteine-rich venom protein pseudechetoxin (238 aa).

The first 19 residues, 1–19 (MIAFIVLLSLAAVLQQSSG), serve as a signal peptide directing secretion. The propeptide occupies 20-27 (TADFASES). Residues 38–164 (VDKHNALRRS…SSKYLYVCQY (127 aa)) form the SCP domain. Residues threonine 51 and serine 106 each contribute to the Zn(2+) site. Intrachain disulfides connect cysteine 75/cysteine 153, cysteine 92/cysteine 165, cysteine 148/cysteine 162, cysteine 184/cysteine 191, cysteine 187/cysteine 196, cysteine 200/cysteine 233, cysteine 209/cysteine 227, and cysteine 218/cysteine 231. In terms of domain architecture, ShKT spans 200–233 (CKRNNDFSNCKSLAKKSKCQTEWIKKKCPASCFC).

In terms of tissue distribution, expressed by the venom gland.

The protein resides in the secreted. Functionally, blocks olfactory (CNGA2) and retinal (CNGA1) cyclic nucleotide-gated (CNG) ion channel currents. Does not inhibit retinal (CNGA3) currents. It forms high-affinity contacts with the pore turret region and most likely inhibits CNG channel current by blocking the external entrance to the transmembrane pore. Is really more potent that Pseudecin. Does not affect neither depolarization- nor caffeine-induced contraction arterial smooth muscle. This chain is Cysteine-rich venom protein pseudechetoxin, found in Pseudechis australis (Mulga snake).